A 988-amino-acid polypeptide reads, in one-letter code: UPF0182 protein MAB_3498c (988 aa).

7 consecutive transmembrane segments (helical) span residues 19–39 (LVAA…LVDT), 63–83 (LALF…GFGL), 114–134 (LFLI…AQSY), 176–196 (FIAA…FGGI), 211–231 (IQLI…YWLD), 260–280 (KLIL…ALVL), and 288–308 (IGLA…PLIV).

The protein belongs to the UPF0182 family.

It localises to the cell membrane. This chain is UPF0182 protein MAB_3498c, found in Mycobacteroides abscessus (strain ATCC 19977 / DSM 44196 / CCUG 20993 / CIP 104536 / JCM 13569 / NCTC 13031 / TMC 1543 / L948) (Mycobacterium abscessus).